The chain runs to 230 residues: Large ribosomal subunit protein uL1 (230 aa).

This sequence belongs to the universal ribosomal protein uL1 family. Part of the 50S ribosomal subunit.

Functionally, binds directly to 23S rRNA. The L1 stalk is quite mobile in the ribosome, and is involved in E site tRNA release. Protein L1 is also a translational repressor protein, it controls the translation of the L11 operon by binding to its mRNA. The chain is Large ribosomal subunit protein uL1 from Lactobacillus gasseri (strain ATCC 33323 / DSM 20243 / BCRC 14619 / CIP 102991 / JCM 1131 / KCTC 3163 / NCIMB 11718 / NCTC 13722 / AM63).